The sequence spans 784 residues: LPS-assembly protein LptD (784 aa).

The N-terminal stretch at 1 to 24 (MKKRIPTLLATMIATALYSQQGLA) is a signal peptide. 2 disulfides stabilise this stretch: C31/C724 and C173/C725.

Belongs to the LptD family. Component of the lipopolysaccharide transport and assembly complex. Interacts with LptE and LptA. In terms of processing, contains two intramolecular disulfide bonds.

The protein resides in the cell outer membrane. Functionally, together with LptE, is involved in the assembly of lipopolysaccharide (LPS) at the surface of the outer membrane. The sequence is that of LPS-assembly protein LptD from Escherichia coli O1:K1 / APEC.